The primary structure comprises 197 residues: Xanthine phosphoribosyltransferase (197 aa).

Leucine 20 and threonine 27 together coordinate xanthine. Residue 128–132 participates in 5-phospho-alpha-D-ribose 1-diphosphate binding; sequence ANGQA. A xanthine-binding site is contributed by lysine 156.

This sequence belongs to the purine/pyrimidine phosphoribosyltransferase family. Xpt subfamily. In terms of assembly, homodimer.

The protein resides in the cytoplasm. The catalysed reaction is XMP + diphosphate = xanthine + 5-phospho-alpha-D-ribose 1-diphosphate. The protein operates within purine metabolism; XMP biosynthesis via salvage pathway; XMP from xanthine: step 1/1. Converts the preformed base xanthine, a product of nucleic acid breakdown, to xanthosine 5'-monophosphate (XMP), so it can be reused for RNA or DNA synthesis. This is Xanthine phosphoribosyltransferase from Lactococcus lactis subsp. cremoris (strain MG1363).